The chain runs to 156 residues: Transcription antitermination protein NusB (156 aa).

It belongs to the NusB family.

Its function is as follows. Involved in transcription antitermination. Required for transcription of ribosomal RNA (rRNA) genes. Binds specifically to the boxA antiterminator sequence of the ribosomal RNA (rrn) operons. In Bartonella quintana (strain Toulouse) (Rochalimaea quintana), this protein is Transcription antitermination protein NusB.